Reading from the N-terminus, the 453-residue chain is UDP-glycosyltransferase 79B6 (453 aa).

UDP-alpha-D-glucose-binding positions include Ser266, Val325–Gln327, His342–Glu350, and Leu364–Gln367.

This sequence belongs to the UDP-glycosyltransferase family.

This chain is UDP-glycosyltransferase 79B6 (UGT79B6), found in Arabidopsis thaliana (Mouse-ear cress).